The chain runs to 778 residues: Ribonucleoside-diphosphate reductase large subunit (778 aa).

Substrate contacts are provided by residues serine 177, 192-193 (SC), glycine 221, 419-423 (NLCIE), and 613-617 (PTATS). Cysteine 193 and cysteine 439 form a disulfide bridge. Asparagine 419 serves as the catalytic Proton acceptor. The Cysteine radical intermediate role is filled by cysteine 421. Glutamate 423 acts as the Proton acceptor in catalysis.

It belongs to the ribonucleoside diphosphate reductase large chain family. As to quaternary structure, heterotetramer composed of a homodimer of the large subunit (R1) and a homodimer of the small subunit (R2). Larger multisubunit protein complex are also active, composed of (R1)n(R2)n.

The catalysed reaction is a 2'-deoxyribonucleoside 5'-diphosphate + [thioredoxin]-disulfide + H2O = a ribonucleoside 5'-diphosphate + [thioredoxin]-dithiol. With respect to regulation, under complex allosteric control mediated by deoxynucleoside triphosphates and ATP binding. The type of nucleotide bound at the specificity site determines substrate preference. It seems probable that ATP makes the enzyme reduce CDP and UDP, dGTP favors ADP reduction and dTTP favors GDP reduction. Ribonucleoside-diphosphate reductase holoenzyme provides the precursors necessary for viral DNA synthesis. Allows virus growth in non-dividing cells. Catalyzes the biosynthesis of deoxyribonucleotides from the corresponding ribonucleotides. The protein is Ribonucleoside-diphosphate reductase large subunit of Ornithodoros (relapsing fever ticks).